Consider the following 351-residue polypeptide: Quinolinate phosphoribosyltransferase [decarboxylating] 2b, mitochondrial (351 aa).

Substrate contacts are provided by residues R142, 173–175, R197, K207, E240, D267, 299–301, and 320–322; these read TRK, SGN, and SGA.

It belongs to the NadC/ModD family. In terms of tissue distribution, expressed in roots and flowers.

It localises to the mitochondrion. It catalyses the reaction nicotinate beta-D-ribonucleotide + CO2 + diphosphate = quinolinate + 5-phospho-alpha-D-ribose 1-diphosphate + 2 H(+). It participates in alkaloid biosynthesis; nicotine biosynthesis. Its pathway is cofactor biosynthesis; NAD(+) biosynthesis; nicotinate D-ribonucleotide from quinolinate: step 1/1. Its function is as follows. Involved in the biosynthesis of pyridine alkaloid natural products, leading mainly to the production of anabasine, anatabine, nicotine and nornicotine, effective deterrents against herbivores with antiparasitic and pesticide properties (neurotoxins); nornicotine serves as the precursor in the synthesis of the carcinogen compound N'-nitrosonornicotine (NNN). Involved in the catabolism of quinolinic acid (QA). This chain is Quinolinate phosphoribosyltransferase [decarboxylating] 2b, mitochondrial, found in Nicotiana tabacum (Common tobacco).